The primary structure comprises 152 residues: Endoribonuclease YbeY (152 aa).

The Zn(2+) site is built by His-111, His-115, and His-121.

This sequence belongs to the endoribonuclease YbeY family. Zn(2+) serves as cofactor.

It is found in the cytoplasm. Its function is as follows. Single strand-specific metallo-endoribonuclease involved in late-stage 70S ribosome quality control and in maturation of the 3' terminus of the 16S rRNA. In Pseudomonas fluorescens (strain ATCC BAA-477 / NRRL B-23932 / Pf-5), this protein is Endoribonuclease YbeY.